Consider the following 363-residue polypeptide: Mitogen-activated protein kinase 13 (363 aa).

Positions 33-319 constitute a Protein kinase domain; it reads IPPIEPIGRG…VDEALKQPYL (287 aa). ATP is bound by residues 39–47 and lysine 62; that span reads IGRGAYGIV. Catalysis depends on aspartate 159, which acts as the Proton acceptor. A Phosphothreonine modification is found at threonine 191. A TXY motif is present at residues 191–193; that stretch reads TEY. Tyrosine 193 is subject to Phosphotyrosine. Residue threonine 196 is modified to Phosphothreonine.

It belongs to the protein kinase superfamily. CMGC Ser/Thr protein kinase family. MAP kinase subfamily. In terms of assembly, interacts with MKK6. Dually phosphorylated on Thr-191 and Tyr-193, which activates the enzyme. Expressed in roots, stems and flower buds.

The enzyme catalyses L-seryl-[protein] + ATP = O-phospho-L-seryl-[protein] + ADP + H(+). It carries out the reaction L-threonyl-[protein] + ATP = O-phospho-L-threonyl-[protein] + ADP + H(+). Its activity is regulated as follows. Activated by threonine and tyrosine phosphorylation. Activated by the MAP kinase kinase MKK6 in vitro. MKK6-MPK13 module positively regulates lateral root formation. This Arabidopsis thaliana (Mouse-ear cress) protein is Mitogen-activated protein kinase 13 (MPK13).